The primary structure comprises 110 residues: MGQNPKRLLKRAEFLAVRRGEKRRGRFFLVEVLDRGDGGVPRVGYTVTKKVGNAVVRNRVRRRLKEAVRVHAADDMVPGNDYVIVGRDDALRAPFGQLKAELSRRFRGTR.

This sequence belongs to the RnpA family. As to quaternary structure, consists of a catalytic RNA component (M1 or rnpB) and a protein subunit.

The enzyme catalyses Endonucleolytic cleavage of RNA, removing 5'-extranucleotides from tRNA precursor.. Its function is as follows. RNaseP catalyzes the removal of the 5'-leader sequence from pre-tRNA to produce the mature 5'-terminus. It can also cleave other RNA substrates such as 4.5S RNA. The protein component plays an auxiliary but essential role in vivo by binding to the 5'-leader sequence and broadening the substrate specificity of the ribozyme. The sequence is that of Ribonuclease P protein component from Mesorhizobium japonicum (strain LMG 29417 / CECT 9101 / MAFF 303099) (Mesorhizobium loti (strain MAFF 303099)).